The primary structure comprises 554 residues: MTDGKTTTVRAPRGTELSCKGWHQEGALRMLMNNLDPEVAERPEELVVYGGTGKAARSWECFWAIVEALRGLDGDETLLVQSGKPVAVFRTHPWAPRVLIANSLLVPEWADWETFRELERAGLTMFGQMTAGSWIYIGTQGILQGTYETFAALAEQRFGGTLRGRVCLTAGLGGMGGAQPLAITMNEGVALCVEVDPRRIDRRLEHRYLDERIDDLDAAVERAEEARREGEPLSIGIPGNAAEVFPALLERGYVPDAVTDQTSAHDPLGGYIPAGYTLEEAAELREADPGRYVREARASMARHCAAMVGFMERGAEVFDYGNNLRGEARLGGFERAFSYPGFVPAYIRPLFCEGKGPFRWAALSGDPDDIAATDEAVLELFPENGRLVRWIRQARERVRFQGLPARICWLGAGERHRAGLRFNELVAGGTISAPIVIGRDHLDSGSVASPYRETEGMRDGSDAIADWPVLNALLNTASGASWVAVHHGGGVGIGKSIHAGAQVVVDGTEEGAARIERVLTNDPSLGVVRHADAGYERAREAARALGIRMPMLGR.

NAD(+)-binding positions include 50 to 51 (GG), Q128, 174 to 176 (GMG), E194, R199, 240 to 241 (NA), 261 to 265 (QTSAH), 271 to 272 (YI), and Y320. The active site involves C408. G490 provides a ligand contact to NAD(+).

Belongs to the urocanase family. It depends on NAD(+) as a cofactor.

Its subcellular location is the cytoplasm. The enzyme catalyses 4-imidazolone-5-propanoate = trans-urocanate + H2O. Its pathway is amino-acid degradation; L-histidine degradation into L-glutamate; N-formimidoyl-L-glutamate from L-histidine: step 2/3. In terms of biological role, catalyzes the conversion of urocanate to 4-imidazolone-5-propionate. This Rubrobacter xylanophilus (strain DSM 9941 / JCM 11954 / NBRC 16129 / PRD-1) protein is Urocanate hydratase.